Reading from the N-terminus, the 204-residue chain is MKIVLATNNKDKVKEIKAFYDGYEIYALNEICEPFEIDETGSSFKENALIKATAVYAKLCALKLENEFIALSDDSGISVEALGFAPGIYSARYSGKDATDASNRKKLTCELHKLRLKKSGAFYTACIAVASKFGNFSTHGFMYGTVIDEERGDNGFGYDFMFMPDGFDGTIGQLDVKTKLAISHRSKGLELAKYILNSLEKYYK.

7–12 is a binding site for substrate; the sequence is TNNKDK. Positions 38 and 74 each coordinate Mg(2+). D74 (proton acceptor) is an active-site residue. Substrate contacts are provided by residues S75, 156-159, K179, and 184-185; these read FGYD and HR.

Belongs to the HAM1 NTPase family. In terms of assembly, homodimer. Requires Mg(2+) as cofactor.

The catalysed reaction is XTP + H2O = XMP + diphosphate + H(+). It carries out the reaction dITP + H2O = dIMP + diphosphate + H(+). The enzyme catalyses ITP + H2O = IMP + diphosphate + H(+). Functionally, pyrophosphatase that catalyzes the hydrolysis of nucleoside triphosphates to their monophosphate derivatives, with a high preference for the non-canonical purine nucleotides XTP (xanthosine triphosphate), dITP (deoxyinosine triphosphate) and ITP. Seems to function as a house-cleaning enzyme that removes non-canonical purine nucleotides from the nucleotide pool, thus preventing their incorporation into DNA/RNA and avoiding chromosomal lesions. This is dITP/XTP pyrophosphatase from Campylobacter fetus subsp. fetus (strain 82-40).